A 228-amino-acid polypeptide reads, in one-letter code: Geranylgeranylglyceryl phosphate synthase (228 aa).

Sn-glycerol 1-phosphate is bound at residue lysine 14. Mg(2+) contacts are provided by aspartate 16 and threonine 42. Sn-glycerol 1-phosphate contacts are provided by residues 160–165, glycine 190, and 210–211; these read YIEYSG and GN.

This sequence belongs to the GGGP/HepGP synthase family. Group I subfamily. Mg(2+) is required as a cofactor.

It localises to the cytoplasm. It carries out the reaction sn-glycerol 1-phosphate + (2E,6E,10E)-geranylgeranyl diphosphate = sn-3-O-(geranylgeranyl)glycerol 1-phosphate + diphosphate. It functions in the pathway membrane lipid metabolism; glycerophospholipid metabolism. Its function is as follows. Prenyltransferase that catalyzes the transfer of the geranylgeranyl moiety of geranylgeranyl diphosphate (GGPP) to the C3 hydroxyl of sn-glycerol-1-phosphate (G1P). This reaction is the first ether-bond-formation step in the biosynthesis of archaeal membrane lipids. In Methanocella arvoryzae (strain DSM 22066 / NBRC 105507 / MRE50), this protein is Geranylgeranylglyceryl phosphate synthase.